We begin with the raw amino-acid sequence, 804 residues long: SH3-containing GRB2-like protein 3-interacting protein 1 (804 aa).

Disordered stretches follow at residues 1–90, 124–181, and 199–254; these read MMEG…EESH, LSPS…GPPL, and IWGS…QSAT. The segment covering 16-34 has biased composition (basic and acidic residues); it reads RKKEKDTDSTGSPDRDGIK. Phosphoserine occurs at positions 54, 80, 81, 83, 125, 127, 132, and 145. Residues Thr-156 and Thr-158 each carry the phosphothreonine modification. Ser-212 carries the post-translational modification Phosphoserine. Over residues 221 to 236 the composition is skewed to pro residues; that stretch reads TGTPPPLPPKNVPATP. Thr-223 and Thr-235 each carry phosphothreonine. Phosphoserine is present on residues Ser-241, Ser-263, Ser-276, Ser-292, and Ser-295. Over residues 289-309 the composition is skewed to basic and acidic residues; sequence VHFSDTSPEHVTPELTPREKV. Residues 289–500 are disordered; sequence VHFSDTSPEH…LSAATTPTVE (212 aa). 2 positions are modified to phosphothreonine: Thr-300 and Thr-304. Pro residues predominate over residues 322 to 346; it reads SPAPGPLGPPGPTGPPGPPGPPRNV. Ser-348 carries the post-translational modification Phosphoserine. Over residues 354–369 the composition is skewed to basic and acidic residues; the sequence is EVQKKVAEQTFIKDDY. The residue at position 375 (Ser-375) is a Phosphoserine. Residue Thr-386 is modified to Phosphothreonine. Low complexity predominate over residues 413–432; that stretch reads TSGASSPARPATPLLPCSST. The segment covering 433 to 451 has biased composition (pro residues); the sequence is TPPPPPPRPPSRPKLPPGK. Composition is skewed to low complexity over residues 458 to 468 and 475 to 498; these read SRPFSPPIHSS and PLAR…TTPT. The residue at position 462 (Ser-462) is a Phosphoserine. In terms of domain architecture, MHD spans 535–803; the sequence is TLPVAAAFTE…RFAAGKYLAD (269 aa). Interaction with DPF motifs-containing proteins regions lie at residues 537-543, 569-571, 643-646, and 789-794; these read PVAAAFT, SFP, TYYN, and SLIKKR. A necessary and sufficient to mediate interaction with CANX region spans residues 625–804; sequence MPNLMTHLKK…FAAGKYLADN (180 aa).

In terms of assembly, interacts with proteins essential or regulating the formation of functional clathrin-coated pits. Interacts with CANX. Interacts with AP2A1. Interacts with EPS15. Interacts with SH3GL3. Interacts with AMPH. Interacts with ITSN1 (via SH3 domains). Interacts with and REPS1.

The protein resides in the membrane. The protein localises to the clathrin-coated pit. Its function is as follows. May function in clathrin-mediated endocytosis. Has both a membrane binding/tubulating activity and the ability to recruit proteins essential to the formation of functional clathrin-coated pits. Has a preference for membranes enriched in phosphatidylserine and phosphoinositides and is required for the endocytosis of the transferrin receptor. May also bind tubulin. May play a role in the regulation of energy homeostasis. This chain is SH3-containing GRB2-like protein 3-interacting protein 1 (SGIP1), found in Pongo abelii (Sumatran orangutan).